Reading from the N-terminus, the 416-residue chain is Xyloglucan O-acetyltransferase 1 (416 aa).

Residues 1–14 are Cytoplasmic-facing; that stretch reads MGLNEQQNVPSQRK. Residues 15-35 traverse the membrane as a helical; Signal-anchor for type II membrane protein segment; sequence IIVFIVLAFIPIALFRLCFNN. Residues 36–416 lie on the Lumenal side of the membrane; that stretch reads PFSSIKDTSL…MIEMLRRWKV (381 aa). Intrachain disulfides connect C79–C129, C100–C165, C109–C395, and C318–C391. Residue N96 is glycosylated (N-linked (GlcNAc...) asparagine). Residues 152-154 carry the GDS motif motif; that stretch reads GDS. S154 (nucleophile) is an active-site residue. Residues N194, N269, and N319 are each glycosylated (N-linked (GlcNAc...) asparagine). D390 serves as the catalytic Proton donor. Residues 390–393 carry the DXXH motif motif; it reads DCLH. The Proton acceptor role is filled by H393.

Belongs to the PC-esterase family. TBL subfamily.

It is found in the golgi apparatus membrane. Its function is as follows. Xyloglucan acetyltransferase that catalyzes the acetylation of fucosylated Gal residues on xyloglucan side chains. Predominantly catalyze 6-O-monoacetylation of Gal residues in the Fuc-Gal-Xyl trisaccharide side chains of xyloglucan oligomers. Involved in xyloglucan specific O-acetylation in roots and rosette leaves. In Arabidopsis thaliana (Mouse-ear cress), this protein is Xyloglucan O-acetyltransferase 1.